A 309-amino-acid chain; its full sequence is tRNA dimethylallyltransferase (309 aa).

11–18 (GPTASGKS) is a binding site for ATP. A substrate-binding site is contributed by 13-18 (TASGKS). 2 interaction with substrate tRNA regions span residues 36 to 39 (DSMQ) and 160 to 164 (QRLLR).

It belongs to the IPP transferase family. As to quaternary structure, monomer. It depends on Mg(2+) as a cofactor.

It carries out the reaction adenosine(37) in tRNA + dimethylallyl diphosphate = N(6)-dimethylallyladenosine(37) in tRNA + diphosphate. In terms of biological role, catalyzes the transfer of a dimethylallyl group onto the adenine at position 37 in tRNAs that read codons beginning with uridine, leading to the formation of N6-(dimethylallyl)adenosine (i(6)A). The polypeptide is tRNA dimethylallyltransferase (Caulobacter sp. (strain K31)).